A 130-amino-acid chain; its full sequence is MDRLSFLTFIMLILASYRLTHLIVFDKITEFIRKPFMKKKRIVDQNGHVDEKSVPASNFGYMLNCYWCAGVWCAILIGLGYLFLPRIAIPLIFILAIAGAQAILETAVGVGVKLIDVLKSLQTMMNDKKS.

3 helical membrane-spanning segments follow: residues 4–25 (LSFLTFIMLILASYRLTHLIVF), 62–84 (MLNCYWCAGVWCAILIGLGYLFL), and 89–111 (IPLIFILAIAGAQAILETAVGVG).

This sequence belongs to the UPF0713 family.

It is found in the cell membrane. This Bacillus subtilis (strain 168) protein is UPF0713 protein YngL (yngL).